A 1256-amino-acid polypeptide reads, in one-letter code: Nephrin (1256 aa).

A signal peptide spans 1-35 (MGAKEATVRGPGASPVHRTCHLIPLLLAGMLTTGL). The Extracellular segment spans residues 36–1078 (AQSPVPTSAP…PGPPRLPLLP (1043 aa)). Ig-like C2-type domains are found at residues 39–144 (PVPT…VILS), 149–247 (PKVL…ASFT), 256–347 (PPVI…RSIT), 354–448 (PSAV…KSLT), 454–554 (PAQK…TQLV), and 558–649 (PPTN…ETVS). Residue Asn-54 is glycosylated (N-linked (GlcNAc...) asparagine). Cystine bridges form between Cys-67–Cys-125, Cys-174–Cys-231, and Cys-279–Cys-331. 2 N-linked (GlcNAc...) asparagine glycosylation sites follow: Asn-370 and Asn-415. Cysteines 375 and 431 form a disulfide. Ser-446 is modified (phosphoserine). Cys-479 and Cys-542 form a disulfide bridge. Residues 491–516 (TWLKDSRPVNDPRQSQEPRRVQLGSV) are disordered. A compositionally biased stretch (basic and acidic residues) spans 494–510 (KDSRPVNDPRQSQEPRR). N-linked (GlcNAc...) asparagine glycosylation is found at Asn-561, Asn-578, Asn-591, and Asn-722. Cys-581 and Cys-637 are joined by a disulfide. Ig-like C2-type domains lie at 754–846 (PTIR…LVRL) and 852–953 (PQVD…VSIS). Intrachain disulfides connect Cys-775-Cys-830 and Cys-877-Cys-934. The region spanning 957-1051 (PPLGLKVVSV…GIQVSITTPG (95 aa)) is the Fibronectin type-III domain. The disordered stretch occupies residues 1048 to 1071 (TTPGLDQAPEDTDQPLPTEQPPGP). Residues 1079–1099 (VLFAVGGLLLLSNASCVGGLL) traverse the membrane as a helical segment. Over 1100–1256 (WRRRLRRLAE…LPFELRGHLV (157 aa)) the chain is Cytoplasmic. Ser-1112 is subject to Phosphoserine. Over residues 1112 to 1128 (SEKTEAGSEEDRIRNEY) the composition is skewed to basic and acidic residues. A disordered region spans residues 1112–1143 (SEKTEAGSEEDRIRNEYEESQWTGDRDTRSST). Thr-1115 is subject to Phosphothreonine. Phosphoserine is present on Ser-1119. Position 1208 is a phosphotyrosine; by FYN (Tyr-1208).

Belongs to the immunoglobulin superfamily. Interacts with NPHS2 and with CD2AP (via C-terminal domain). Interacts with MAGI1 (via PDZ 2 and 3 domains) forming a tripartite complex with IGSF5/JAM4. Forms a complex with ACTN4, CASK, IQGAP1, MAGI2, SPTAN1 and SPTBN1. Interacts with DDN; the interaction is direct. Self-associates (via the Ig-like domains). Also interacts (via the Ig-like domains) with KIRREL1 and KIRREL2; the interaction with KIRREL1 is dependent on KIRREL1 glycosylation. Interacts with KIRREL3. Interacts with phosphatidylinositol 3-kinase regulatory subunit PIK3R1; the interaction is reduced by high glucose levels. Phosphorylated at Tyr-1208 by FYN, leading to the recruitment and activation of phospholipase C-gamma-1/PLCG1. Tyrosine phosphorylation is reduced by high glucose levels. Dephosphorylated by tensin TNS2 which leads to reduced binding of NPHN1 to PIK3R1. As to expression, expressed in kidney glomeruli. In the embryo, expressed in the mesonephric kidney at 11 dpc with strong expression in cranial tubules with podocyte-like structures. Expression is observed in the podocytes of the developing kidney from 13 dpc. High expression is also detected in the developing cerebellum, hindbrain, spinal cord, retina and hypothalamus. Expressed in skeletal muscle during myoblast fusion such as in the adult following acute injury and in the embryo but not detected in uninjured adult skeletal muscle. Isoform 1 and isoform 2 are expressed in the newborn brain and developing cerebellum. Isoform 1 is the predominant isoform in adult kidney.

The protein localises to the cell membrane. Seems to play a role in the development or function of the kidney glomerular filtration barrier. Regulates glomerular vascular permeability. May anchor the podocyte slit diaphragm to the actin cytoskeleton. Plays a role in skeletal muscle formation through regulation of myoblast fusion. In Mus musculus (Mouse), this protein is Nephrin (Nphs1).